Here is a 463-residue protein sequence, read N- to C-terminus: Fumarate hydratase class II (463 aa).

Substrate contacts are provided by residues 97 to 99 (SGT), 128 to 131 (HPND), 138 to 140 (SSN), and Thr186. His187 (proton donor/acceptor) is an active-site residue. Ser317 is a catalytic residue. Residues Ser318 and 323–325 (KVN) each bind substrate.

Belongs to the class-II fumarase/aspartase family. Fumarase subfamily. In terms of assembly, homotetramer.

The protein resides in the cytoplasm. It catalyses the reaction (S)-malate = fumarate + H2O. It functions in the pathway carbohydrate metabolism; tricarboxylic acid cycle; (S)-malate from fumarate: step 1/1. Functionally, involved in the TCA cycle. Catalyzes the stereospecific interconversion of fumarate to L-malate. This chain is Fumarate hydratase class II, found in Campylobacter jejuni subsp. jejuni serotype O:2 (strain ATCC 700819 / NCTC 11168).